The sequence spans 260 residues: Indole-3-glycerol phosphate synthase (260 aa).

It belongs to the TrpC family.

The catalysed reaction is 1-(2-carboxyphenylamino)-1-deoxy-D-ribulose 5-phosphate + H(+) = (1S,2R)-1-C-(indol-3-yl)glycerol 3-phosphate + CO2 + H2O. It participates in amino-acid biosynthesis; L-tryptophan biosynthesis; L-tryptophan from chorismate: step 4/5. This is Indole-3-glycerol phosphate synthase from Nocardioides sp. (strain ATCC BAA-499 / JS614).